The sequence spans 86 residues: Large ribosomal subunit protein uL23 (86 aa).

This sequence belongs to the universal ribosomal protein uL23 family. Part of the 50S ribosomal subunit. Contacts protein L29.

Its function is as follows. Binds to 23S rRNA. One of the proteins that surrounds the polypeptide exit tunnel on the outside of the ribosome. The polypeptide is Large ribosomal subunit protein uL23 (Methanococcus maripaludis (strain C5 / ATCC BAA-1333)).